Consider the following 99-residue polypeptide: uncharacterized protein (99 aa).

Positions 43 to 95 form a coiled coil; that stretch reads ENEEIYADQVRRIKLRLRELRETYATSEDNWRELMDNLEELRDQIERLAIRGG.

This is an uncharacterized protein from Archaeoglobus fulgidus (strain ATCC 49558 / DSM 4304 / JCM 9628 / NBRC 100126 / VC-16).